We begin with the raw amino-acid sequence, 548 residues long: CTP synthase (548 aa).

The tract at residues 1-270 (MTKYVFVTGG…DNIVCEALGL (270 aa)) is amidoligase domain. CTP is bound at residue Ser13. Residue Ser13 participates in UTP binding. ATP contacts are provided by residues 14–19 (SLGKGI) and Asp71. Mg(2+) is bound by residues Asp71 and Glu144. CTP is bound by residues 151–153 (DIE), 191–196 (KTKPTQ), and Lys227. Residues 191–196 (KTKPTQ) and Lys227 contribute to the UTP site. Residues 295–545 (TIGMVGKYVD…IEAAIANHAR (251 aa)) form the Glutamine amidotransferase type-1 domain. Residue Gly356 coordinates L-glutamine. Cys383 functions as the Nucleophile; for glutamine hydrolysis in the catalytic mechanism. L-glutamine contacts are provided by residues 384–387 (LGMQ), Glu407, and Arg473. Active-site residues include His518 and Glu520.

The protein belongs to the CTP synthase family. As to quaternary structure, homotetramer.

The enzyme catalyses UTP + L-glutamine + ATP + H2O = CTP + L-glutamate + ADP + phosphate + 2 H(+). The catalysed reaction is L-glutamine + H2O = L-glutamate + NH4(+). It carries out the reaction UTP + NH4(+) + ATP = CTP + ADP + phosphate + 2 H(+). Its pathway is pyrimidine metabolism; CTP biosynthesis via de novo pathway; CTP from UDP: step 2/2. Its activity is regulated as follows. Allosterically activated by GTP, when glutamine is the substrate; GTP has no effect on the reaction when ammonia is the substrate. The allosteric effector GTP functions by stabilizing the protein conformation that binds the tetrahedral intermediate(s) formed during glutamine hydrolysis. Inhibited by the product CTP, via allosteric rather than competitive inhibition. In terms of biological role, catalyzes the ATP-dependent amination of UTP to CTP with either L-glutamine or ammonia as the source of nitrogen. Regulates intracellular CTP levels through interactions with the four ribonucleotide triphosphates. The sequence is that of CTP synthase from Bordetella petrii (strain ATCC BAA-461 / DSM 12804 / CCUG 43448).